We begin with the raw amino-acid sequence, 753 residues long: 5-methyltetrahydropteroyltriglutamate--homocysteine methyltransferase (753 aa).

5-methyltetrahydropteroyltri-L-glutamate contacts are provided by residues 17 to 20 (RELK) and Lys-117. Residues 431 to 433 (IGS) and Glu-484 each bind L-homocysteine. L-methionine is bound by residues 431-433 (IGS) and Glu-484. Residues 515–516 (RC) and Trp-561 contribute to the 5-methyltetrahydropteroyltri-L-glutamate site. Asp-599 provides a ligand contact to L-homocysteine. Asp-599 lines the L-methionine pocket. Glu-605 is a 5-methyltetrahydropteroyltri-L-glutamate binding site. Residues His-641, Cys-643, and Glu-665 each contribute to the Zn(2+) site. The active-site Proton donor is the His-694. Cys-726 is a Zn(2+) binding site.

It belongs to the vitamin-B12 independent methionine synthase family. Requires Zn(2+) as cofactor.

The enzyme catalyses 5-methyltetrahydropteroyltri-L-glutamate + L-homocysteine = tetrahydropteroyltri-L-glutamate + L-methionine. It participates in amino-acid biosynthesis; L-methionine biosynthesis via de novo pathway; L-methionine from L-homocysteine (MetE route): step 1/1. Catalyzes the transfer of a methyl group from 5-methyltetrahydrofolate to homocysteine resulting in methionine formation. This Shigella boydii serotype 18 (strain CDC 3083-94 / BS512) protein is 5-methyltetrahydropteroyltriglutamate--homocysteine methyltransferase.